The chain runs to 313 residues: Olfactory receptor 5H1 (313 aa).

At 1–28 the chain is on the extracellular side; that stretch reads MEEENATLLTEFVLTGFLYQPQWKIPLF. N-linked (GlcNAc...) asparagine glycosylation occurs at Asn5. The chain crosses the membrane as a helical span at residues 29–49; the sequence is LAFLVIYLITIMGNLGLIAVI. Topologically, residues 50-56 are cytoplasmic; that stretch reads WKDPHLH. The helical transmembrane segment at 57–77 threads the bilayer; that stretch reads IPMYLLLGNLAFVDAWISSTV. Topologically, residues 78–98 are extracellular; sequence TPKMLNNFLAKSKMISLSECK. Cysteines 97 and 179 form a disulfide. The helical transmembrane segment at 99 to 119 threads the bilayer; that stretch reads IQFFSFAISVTTECFLLATMA. At 120–143 the chain is on the cytoplasmic side; it reads YDRYVAICKPLLYPAIMTNGLCIR. The chain crosses the membrane as a helical span at residues 144-164; that stretch reads LLILSYVGGILHALIHEGFLF. At 165–195 the chain is on the extracellular side; sequence RLTFCNSNIVHHIYCDTIPLSKISCTDSSIN. A helical membrane pass occupies residues 196–216; the sequence is FLMVFIFSGSIQVFSIVTILV. At 217–240 the chain is on the cytoplasmic side; that stretch reads SYTFVLFAILKKKSDKGVRKAFST. A helical transmembrane segment spans residues 241–261; that stretch reads CGAHLFSVSLYYGPLLFIYVG. At 262–271 the chain is on the extracellular side; it reads PASPQADDQD. The chain crosses the membrane as a helical span at residues 272–292; the sequence is MVEPLFYTVIIPLLNPIIYSL. The Cytoplasmic portion of the chain corresponds to 293–313; that stretch reads RNKQVTVSFTKMLKKHVKVSY.

This sequence belongs to the G-protein coupled receptor 1 family.

The protein resides in the cell membrane. Odorant receptor. The sequence is that of Olfactory receptor 5H1 (OR5H1) from Homo sapiens (Human).